Consider the following 122-residue polypeptide: Large ribosomal subunit protein uL14 (122 aa).

The protein belongs to the universal ribosomal protein uL14 family. Part of the 50S ribosomal subunit. Forms a cluster with proteins L3 and L19. In the 70S ribosome, L14 and L19 interact and together make contacts with the 16S rRNA in bridges B5 and B8.

In terms of biological role, binds to 23S rRNA. Forms part of two intersubunit bridges in the 70S ribosome. The polypeptide is Large ribosomal subunit protein uL14 (Granulibacter bethesdensis (strain ATCC BAA-1260 / CGDNIH1)).